A 207-amino-acid chain; its full sequence is Ubiquinol-cytochrome c reductase iron-sulfur subunit (207 aa).

Residues 24 to 44 (LVAATSVVGAVGAGYALVPFV) traverse the membrane as a helical segment. The region spanning 100–199 (PKLVDPTSEV…HVYLNDTTIL (100 aa)) is the Rieske domain. Positions 134, 136, 162, and 165 each coordinate [2Fe-2S] cluster. Cysteine 139 and cysteine 164 are oxidised to a cystine.

In terms of assembly, the main subunits of complex b-c1 are: cytochrome b, cytochrome c1 and the Rieske protein. [2Fe-2S] cluster serves as cofactor.

The protein localises to the cell membrane. It carries out the reaction a quinol + 2 Fe(III)-[cytochrome c](out) = a quinone + 2 Fe(II)-[cytochrome c](out) + 2 H(+)(out). In terms of biological role, component of the ubiquinol-cytochrome c reductase complex (complex III or cytochrome b-c1 complex), which is a respiratory chain that generates an electrochemical potential coupled to ATP synthesis. This Allochromatium vinosum (strain ATCC 17899 / DSM 180 / NBRC 103801 / NCIMB 10441 / D) (Chromatium vinosum) protein is Ubiquinol-cytochrome c reductase iron-sulfur subunit (petA).